The primary structure comprises 151 residues: Small ribosomal subunit protein bS6 (151 aa).

The segment at 97 to 151 is disordered; the sequence is EAEPSAMMQKRDRDDRKDRDRGDRPRRRDDDFGGGDRGDRGDRGDRPERNFGGEN. Residues 105-151 are compositionally biased toward basic and acidic residues; sequence QKRDRDDRKDRDRGDRPRRRDDDFGGGDRGDRGDRGDRPERNFGGEN.

This sequence belongs to the bacterial ribosomal protein bS6 family.

Its function is as follows. Binds together with bS18 to 16S ribosomal RNA. The chain is Small ribosomal subunit protein bS6 from Methylorubrum populi (strain ATCC BAA-705 / NCIMB 13946 / BJ001) (Methylobacterium populi).